The sequence spans 247 residues: 1-(5-phosphoribosyl)-5-[(5-phosphoribosylamino)methylideneamino] imidazole-4-carboxamide isomerase 1 (247 aa).

Glu-8 functions as the Proton acceptor in the catalytic mechanism. The Proton donor role is filled by Asp-128.

This sequence belongs to the HisA/HisF family.

It localises to the cytoplasm. The enzyme catalyses 1-(5-phospho-beta-D-ribosyl)-5-[(5-phospho-beta-D-ribosylamino)methylideneamino]imidazole-4-carboxamide = 5-[(5-phospho-1-deoxy-D-ribulos-1-ylimino)methylamino]-1-(5-phospho-beta-D-ribosyl)imidazole-4-carboxamide. It functions in the pathway amino-acid biosynthesis; L-histidine biosynthesis; L-histidine from 5-phospho-alpha-D-ribose 1-diphosphate: step 4/9. This Ruegeria sp. (strain TM1040) (Silicibacter sp.) protein is 1-(5-phosphoribosyl)-5-[(5-phosphoribosylamino)methylideneamino] imidazole-4-carboxamide isomerase 1.